A 233-amino-acid chain; its full sequence is Biosynthetic peptidoglycan transglycosylase (233 aa).

Residues 17–37 (IVLAVLALVILPYALIFFYVL) traverse the membrane as a helical segment.

It belongs to the glycosyltransferase 51 family.

The protein resides in the cell inner membrane. The catalysed reaction is [GlcNAc-(1-&gt;4)-Mur2Ac(oyl-L-Ala-gamma-D-Glu-L-Lys-D-Ala-D-Ala)](n)-di-trans,octa-cis-undecaprenyl diphosphate + beta-D-GlcNAc-(1-&gt;4)-Mur2Ac(oyl-L-Ala-gamma-D-Glu-L-Lys-D-Ala-D-Ala)-di-trans,octa-cis-undecaprenyl diphosphate = [GlcNAc-(1-&gt;4)-Mur2Ac(oyl-L-Ala-gamma-D-Glu-L-Lys-D-Ala-D-Ala)](n+1)-di-trans,octa-cis-undecaprenyl diphosphate + di-trans,octa-cis-undecaprenyl diphosphate + H(+). The protein operates within cell wall biogenesis; peptidoglycan biosynthesis. Functionally, peptidoglycan polymerase that catalyzes glycan chain elongation from lipid-linked precursors. The sequence is that of Biosynthetic peptidoglycan transglycosylase from Rhizobium leguminosarum bv. trifolii (strain WSM2304).